We begin with the raw amino-acid sequence, 446 residues long: Probable glycine dehydrogenase (decarboxylating) subunit 1 (446 aa).

The protein belongs to the GcvP family. N-terminal subunit subfamily. In terms of assembly, the glycine cleavage system is composed of four proteins: P, T, L and H. In this organism, the P 'protein' is a heterodimer of two subunits.

The catalysed reaction is N(6)-[(R)-lipoyl]-L-lysyl-[glycine-cleavage complex H protein] + glycine + H(+) = N(6)-[(R)-S(8)-aminomethyldihydrolipoyl]-L-lysyl-[glycine-cleavage complex H protein] + CO2. Functionally, the glycine cleavage system catalyzes the degradation of glycine. The P protein binds the alpha-amino group of glycine through its pyridoxal phosphate cofactor; CO(2) is released and the remaining methylamine moiety is then transferred to the lipoamide cofactor of the H protein. This Xanthobacter autotrophicus (strain ATCC BAA-1158 / Py2) protein is Probable glycine dehydrogenase (decarboxylating) subunit 1.